Consider the following 366-residue polypeptide: Ribosomal RNA large subunit methyltransferase M (366 aa).

S-adenosyl-L-methionine contacts are provided by residues serine 188, 221–224 (CPGG), aspartate 240, aspartate 260, and aspartate 277. The active-site Proton acceptor is the lysine 306.

Belongs to the class I-like SAM-binding methyltransferase superfamily. RNA methyltransferase RlmE family. RlmM subfamily. As to quaternary structure, monomer.

The protein resides in the cytoplasm. It carries out the reaction cytidine(2498) in 23S rRNA + S-adenosyl-L-methionine = 2'-O-methylcytidine(2498) in 23S rRNA + S-adenosyl-L-homocysteine + H(+). Its function is as follows. Catalyzes the 2'-O-methylation at nucleotide C2498 in 23S rRNA. This is Ribosomal RNA large subunit methyltransferase M from Escherichia coli O139:H28 (strain E24377A / ETEC).